A 199-amino-acid polypeptide reads, in one-letter code: MIASVRGEVLDIALDHAVIEASGVGYRVNATPVTLGALHRGSEARLFTTMIVREDSMTLYGFSDTESKDLFSLLQTVSGVGPRLAMATLAVLEPDALRRALSEGNLTALTRVPGIGKRGAERMVVELRDKVDAVATTAGAASGAVVGSSIRDQIVEALEGLGFPIKQAEQATDSVLAESPEATTSVALRSALSLLGKTR.

The tract at residues 1–63 (MIASVRGEVL…EDSMTLYGFS (63 aa)) is domain I. A domain II region spans residues 64 to 141 (DTESKDLFSL…DAVATTAGAA (78 aa)). A flexible linker region spans residues 141–145 (ASGAV). The segment at 146–199 (VGSSIRDQIVEALEGLGFPIKQAEQATDSVLAESPEATTSVALRSALSLLGKTR) is domain III.

This sequence belongs to the RuvA family. As to quaternary structure, homotetramer. Forms an RuvA(8)-RuvB(12)-Holliday junction (HJ) complex. HJ DNA is sandwiched between 2 RuvA tetramers; dsDNA enters through RuvA and exits via RuvB. An RuvB hexamer assembles on each DNA strand where it exits the tetramer. Each RuvB hexamer is contacted by two RuvA subunits (via domain III) on 2 adjacent RuvB subunits; this complex drives branch migration. In the full resolvosome a probable DNA-RuvA(4)-RuvB(12)-RuvC(2) complex forms which resolves the HJ.

It localises to the cytoplasm. The RuvA-RuvB-RuvC complex processes Holliday junction (HJ) DNA during genetic recombination and DNA repair, while the RuvA-RuvB complex plays an important role in the rescue of blocked DNA replication forks via replication fork reversal (RFR). RuvA specifically binds to HJ cruciform DNA, conferring on it an open structure. The RuvB hexamer acts as an ATP-dependent pump, pulling dsDNA into and through the RuvAB complex. HJ branch migration allows RuvC to scan DNA until it finds its consensus sequence, where it cleaves and resolves the cruciform DNA. The chain is Holliday junction branch migration complex subunit RuvA from Rhodococcus erythropolis (strain PR4 / NBRC 100887).